A 594-amino-acid polypeptide reads, in one-letter code: MDSQFFGLLVFYLAILLILAPFLGRYIRRAMEDEHYAATAWGRWLERLMYRLSGVNPAAEMTWRQYAVAVLIFSVLGFIAVYALQRLQGFLPLNPVGLGAVSPDSAFNTAISFVSNTNWQGYSPESTMSYLTQMLALTVQNFLSAAVGMSVLFALIRGFARHGCATVGNFWVDATRATLYVLLPLALALALALVSQGVIQNTAAYQEVTTLQAQSYEQARLDSTGQPMMDAAGKPLTETLVIQTQTLAMGPTASQEAIKLLGINGGGFFNANSAHPYENPTGLSNLLEMLAILIIPAALCFTFGEMVGDRRQGVAILAAMTLLFVGLAWLTQNAEQALTPALSHLSADGLLGNMEGKESRFGVAASALFAVVTTAASCGAVNTMHDSLSAMGGLGPMLLMQLGEVVFGGVGSGLYGMLAFALLGVFIAGLMIGRTPEYLGKKIEAFDMKMVSIAILVTPFLVLAGTALAVSVPQGLAGMLNPGAHGFSEVLYALSSAANNNGSAFAGLSSNTPFYNSLLGLAMWFGRFLVIVAILALAGSLAGKRRLAQSPGSMPTTGPLFIVLLIGTVLLVGALTYVPALALGPVAEHLQARP.

12 consecutive transmembrane segments (helical) span residues Gln4–Gly24, Gln65–Gln85, Ala136–Ile156, Leu179–Ile199, Leu287–Val307, Val314–Ala334, Phe361–Val381, Ala390–Val410, Gly413–Gly433, Met450–Val470, Leu518–Ala538, and Leu560–Ala580.

The protein belongs to the KdpA family. The system is composed of three essential subunits: KdpA, KdpB and KdpC.

Its subcellular location is the cell inner membrane. Part of the high-affinity ATP-driven potassium transport (or Kdp) system, which catalyzes the hydrolysis of ATP coupled with the electrogenic transport of potassium into the cytoplasm. This subunit binds the periplasmic potassium ions and delivers the ions to the membrane domain of KdpB through an intramembrane tunnel. The protein is Potassium-transporting ATPase potassium-binding subunit of Bordetella avium (strain 197N).